We begin with the raw amino-acid sequence, 132 residues long: Intraflagellar transport protein 20 homolog A (132 aa).

The stretch at 87 to 112 (EAQQQQLYALIAEKKMQLERYRIEYD) forms a coiled coil.

The protein resides in the golgi apparatus. Its subcellular location is the cis-Golgi network. It is found in the cytoplasm. It localises to the cytoskeleton. The protein localises to the microtubule organizing center. The protein resides in the centrosome. Its subcellular location is the centriole. It is found in the cell projection. It localises to the cilium. In terms of biological role, involved in ciliary process assembly. May play a role in the trafficking of ciliary membrane proteins from the Golgi complex to the cilium. Regulates the platelet-derived growth factor receptor-alpha (PDGFRA) signaling pathway. Plays an important role in spermatogenesis, particularly spermiogenesis, when germ cells form flagella. This Xenopus laevis (African clawed frog) protein is Intraflagellar transport protein 20 homolog A (ift20-a).